A 510-amino-acid chain; its full sequence is Putative serine protease K12H4.7 (510 aa).

The N-terminal stretch at 1–19 is a signal peptide; the sequence is MKTLLAVLLAACVLTQVLS. Residue S187 is the Charge relay system of the active site. An N-linked (GlcNAc...) asparagine glycan is attached at N234. The Charge relay system role is filled by D452. A glycan (N-linked (GlcNAc...) asparagine) is linked at N473. H477 acts as the Charge relay system in catalysis.

Belongs to the peptidase S28 family.

This chain is Putative serine protease K12H4.7, found in Caenorhabditis elegans.